The following is a 313-amino-acid chain: 3'-5' exoribonuclease YhaM (313 aa).

The OB DNA-binding region spans 22–90; the sequence is SSVKGTASNG…QLKIRQIRQA (69 aa). An HD domain is found at 163 to 279; sequence HVVSMLRLAK…LHQIDLMDAS (117 aa).

It belongs to the YhaM family.

In terms of biological role, shows a 3'-5' exoribonuclease activity. The polypeptide is 3'-5' exoribonuclease YhaM (Listeria innocua serovar 6a (strain ATCC BAA-680 / CLIP 11262)).